A 266-amino-acid chain; its full sequence is Tryptophan synthase alpha chain (266 aa).

Residues E49 and D60 each act as proton acceptor in the active site.

This sequence belongs to the TrpA family. As to quaternary structure, tetramer of two alpha and two beta chains.

The catalysed reaction is (1S,2R)-1-C-(indol-3-yl)glycerol 3-phosphate + L-serine = D-glyceraldehyde 3-phosphate + L-tryptophan + H2O. The protein operates within amino-acid biosynthesis; L-tryptophan biosynthesis; L-tryptophan from chorismate: step 5/5. Its function is as follows. The alpha subunit is responsible for the aldol cleavage of indoleglycerol phosphate to indole and glyceraldehyde 3-phosphate. The sequence is that of Tryptophan synthase alpha chain from Chloroflexus aurantiacus (strain ATCC 29364 / DSM 637 / Y-400-fl).